The sequence spans 236 residues: Phosphoglycolate phosphatase (236 aa).

Catalysis depends on Asp23, which acts as the Nucleophile. Mg(2+)-binding residues include Asp23 and Asp25. Lys162 is a binding site for substrate. Asp185 and Asp189 together coordinate Mg(2+).

The protein belongs to the archaeal SPP-like hydrolase family. Requires Mg(2+) as cofactor.

It catalyses the reaction 2-phosphoglycolate + H2O = glycolate + phosphate. Functionally, catalyzes the dephosphorylation of 2-phosphoglycolate. The protein is Phosphoglycolate phosphatase of Picrophilus torridus (strain ATCC 700027 / DSM 9790 / JCM 10055 / NBRC 100828 / KAW 2/3).